A 168-amino-acid chain; its full sequence is MKEGKALELFNLSTFVFTIINLLVLYYILKRLLFKPVTKFLEDRENKIKSALEDADKQREEAYSLKAQYEEKLQNAENEGRAIIEKAQKEAEERASEIIKSANKEAESIIEKAKEEAVLEKIKAMHELRAEMSHLIIEAASKVLEKKLPVEDEDLIKEVIEEAGSWNK.

The helical transmembrane segment at 9 to 29 (LFNLSTFVFTIINLLVLYYIL) threads the bilayer.

Belongs to the ATPase B chain family. As to quaternary structure, F-type ATPases have 2 components, F(1) - the catalytic core - and F(0) - the membrane proton channel. F(1) has five subunits: alpha(3), beta(3), gamma(1), delta(1), epsilon(1). F(0) has three main subunits: a(1), b(2) and c(10-14). The alpha and beta chains form an alternating ring which encloses part of the gamma chain. F(1) is attached to F(0) by a central stalk formed by the gamma and epsilon chains, while a peripheral stalk is formed by the delta and b chains.

Its subcellular location is the cell membrane. F(1)F(0) ATP synthase produces ATP from ADP in the presence of a proton or sodium gradient. F-type ATPases consist of two structural domains, F(1) containing the extramembraneous catalytic core and F(0) containing the membrane proton channel, linked together by a central stalk and a peripheral stalk. During catalysis, ATP synthesis in the catalytic domain of F(1) is coupled via a rotary mechanism of the central stalk subunits to proton translocation. In terms of biological role, component of the F(0) channel, it forms part of the peripheral stalk, linking F(1) to F(0). This is ATP synthase subunit b from Caldanaerobacter subterraneus subsp. tengcongensis (strain DSM 15242 / JCM 11007 / NBRC 100824 / MB4) (Thermoanaerobacter tengcongensis).